A 121-amino-acid polypeptide reads, in one-letter code: uncharacterized protein (121 aa).

The tract at residues 85 to 111 (NANNDDYESPYKTPKIKSNPSLDSSGS) is disordered. Residues 100–111 (IKSNPSLDSSGS) show a composition bias toward polar residues.

This is an uncharacterized protein from Dictyostelium discoideum (Social amoeba).